A 116-amino-acid polypeptide reads, in one-letter code: Cell division protein FtsL (116 aa).

At 1–24 the chain is on the cytoplasmic side; sequence MMLTNRQIRVRLFESLKNSFFKKT. Residues 25 to 45 form a helical membrane-spanning segment; the sequence is VGISFALLFILLITAFSLIVV. The Periplasmic segment spans residues 46–116; that stretch reads RFEYKLQLNE…NEQKEELNNE (71 aa).

It belongs to the FtsL family. As to quaternary structure, part of a complex composed of FtsB, FtsL and FtsQ.

It localises to the cell inner membrane. Essential cell division protein. May link together the upstream cell division proteins, which are predominantly cytoplasmic, with the downstream cell division proteins, which are predominantly periplasmic. The protein is Cell division protein FtsL of Francisella tularensis subsp. tularensis (strain SCHU S4 / Schu 4).